A 136-amino-acid polypeptide reads, in one-letter code: Large ribosomal subunit protein uL16 (136 aa).

Belongs to the universal ribosomal protein uL16 family. Part of the 50S ribosomal subunit.

Its function is as follows. Binds 23S rRNA and is also seen to make contacts with the A and possibly P site tRNAs. The protein is Large ribosomal subunit protein uL16 of Buchnera aphidicola subsp. Baizongia pistaciae (strain Bp).